Consider the following 197-residue polypeptide: Probable nicotinate-nucleotide adenylyltransferase (197 aa).

The protein belongs to the NadD family.

The enzyme catalyses nicotinate beta-D-ribonucleotide + ATP + H(+) = deamido-NAD(+) + diphosphate. Its pathway is cofactor biosynthesis; NAD(+) biosynthesis; deamido-NAD(+) from nicotinate D-ribonucleotide: step 1/1. Its function is as follows. Catalyzes the reversible adenylation of nicotinate mononucleotide (NaMN) to nicotinic acid adenine dinucleotide (NaAD). In Pseudothermotoga lettingae (strain ATCC BAA-301 / DSM 14385 / NBRC 107922 / TMO) (Thermotoga lettingae), this protein is Probable nicotinate-nucleotide adenylyltransferase.